The sequence spans 349 residues: MIYDFFMTWLFPLLIIVGKTLLLLVILLLLVAYLLYADRKIWAAVQLRRGPNVVGPWGLLQSFADLIKFVVKEPIIPAGANKGVFLLAPFVSATLALSTWAVIPVNEGWAVANINVGLLYILAISSLEVYGVIMGGWASNSKYPFLGALRSAAQMVSYEVSIGFVLVTVILVSGSLDLTTIVQKQSHGMGTALGLPFNSFLDWNWLVLFPMFIIFFISALAETNRPPFDLVEAESELVAGHMVEYSSTPYMLFFLGEYVAIVLMCALTTILFLGGWLPPLDVWWLNWVPGIIWFVLKVCFVFFWFAMVKAFVPRYRYDQLMRLGWKVFLPLSLAMVVITAAFLKYTGFA.

8 helical membrane passes run 11–31 (FPLLIIVGKTLLLLVILLLLV), 83–103 (GVFLLAPFVSATLALSTWAVI), 116–136 (VGLLYILAISSLEVYGVIMGG), 162–182 (IGFVLVTVILVSGSLDLTTIV), 200–220 (FLDWNWLVLFPMFIIFFISAL), 252–272 (LFFLGEYVAIVLMCALTTILF), 288–308 (VPGIIWFVLKVCFVFFWFAMV), and 323–343 (LGWKVFLPLSLAMVVITAAFL).

This sequence belongs to the complex I subunit 1 family. In terms of assembly, NDH-1 is composed of 14 different subunits. Subunits NuoA, H, J, K, L, M, N constitute the membrane sector of the complex.

It localises to the cell inner membrane. The enzyme catalyses a quinone + NADH + 5 H(+)(in) = a quinol + NAD(+) + 4 H(+)(out). In terms of biological role, NDH-1 shuttles electrons from NADH, via FMN and iron-sulfur (Fe-S) centers, to quinones in the respiratory chain. The immediate electron acceptor for the enzyme in this species is believed to be ubiquinone. Couples the redox reaction to proton translocation (for every two electrons transferred, four hydrogen ions are translocated across the cytoplasmic membrane), and thus conserves the redox energy in a proton gradient. This subunit may bind ubiquinone. This chain is NADH-quinone oxidoreductase subunit H, found in Bartonella henselae (strain ATCC 49882 / DSM 28221 / CCUG 30454 / Houston 1) (Rochalimaea henselae).